We begin with the raw amino-acid sequence, 157 residues long: Mitochondrial inner membrane protease subunit 1 (157 aa).

Residues serine 35 and lysine 80 contribute to the active site.

Belongs to the peptidase S26 family. IMP1 subfamily. As to quaternary structure, heterodimer of 2 subunits, imp1 and imp2.

Its subcellular location is the mitochondrion inner membrane. In terms of biological role, catalyzes the removal of transit peptides required for the targeting of proteins from the mitochondrial matrix, across the inner membrane, into the inter-membrane space. The protein is Mitochondrial inner membrane protease subunit 1 (imp1) of Schizosaccharomyces pombe (strain 972 / ATCC 24843) (Fission yeast).